Here is a 617-residue protein sequence, read N- to C-terminus: Prothrombin (617 aa).

Positions 1–24 (MLHVRGLGLPGCLALAALASLVHS) are cleaved as a signal peptide. Residues 25 to 43 (QHVFLAPQQALSLLQRVRR) constitute a propeptide that is removed on maturation. The Gla domain occupies 44–90 (ANSGFLEELRKGNLERECVEEQCSYEEAFEALESPQDTDVFWAKYTV). 10 positions are modified to 4-carboxyglutamate: Glu-50, Glu-51, Glu-58, Glu-60, Glu-63, Glu-64, Glu-69, Glu-70, Glu-73, and Glu-76. Cys-61 and Cys-66 are disulfide-bonded. Disulfide bonds link Cys-91-Cys-104, Cys-109-Cys-187, Cys-130-Cys-170, Cys-158-Cys-182, Cys-215-Cys-292, Cys-236-Cys-276, Cys-264-Cys-287, Cys-332-Cys-478, Cys-387-Cys-403, and Cys-532-Cys-546. 2 consecutive Kringle domains span residues 109 to 187 (CAMD…IPVC) and 215 to 292 (CLLE…LNYC). 2 N-linked (GlcNAc...) asparagine glycosylation sites follow: Asn-120 and Asn-144. The Peptidase S1 domain occupies 360–614 (IVEGWDAEKG…LKRWMQKVID (255 aa)). The active-site Charge relay system is His-402. Asn-412 carries an N-linked (GlcNAc...) asparagine glycan. Asp-458 functions as the Charge relay system in the catalytic mechanism. Positions 547–569 (AGFKVNDTKRGDACEGDSGGPFV) are high affinity receptor-binding region which is also known as the TP508 peptide. N-linked (GlcNAc...) asparagine glycosylation is present at Asn-552. An intrachain disulfide couples Cys-560 to Cys-590. Ser-564 (charge relay system) is an active-site residue.

Belongs to the peptidase S1 family. As to quaternary structure, heterodimer (named alpha-thrombin) of a light and a heavy chain; disulfide-linked. Forms a heterodimer with SERPINA5. In plasma, interacts (via N-terminus) with alpha-1-microglobulin; this interaction does not prevent the activation of prothrombin to thrombin. Post-translationally, the gamma-carboxyglutamyl residues, which bind calcium ions, result from the carboxylation of glutamyl residues by a microsomal enzyme, the vitamin K-dependent carboxylase. The modified residues are necessary for the calcium-dependent interaction with a negatively charged phospholipid surface, which is essential for the conversion of prothrombin to thrombin. In the penultimate step of the coagulation cascade, prothrombin is converted to thrombin by the prothrombinase complex composed of factor Xa (F10), cofactor Va (F5), and phospholipids. This activation requires factor Xa-catalyzed sequential cleavage at 2 sites, Arg-310 and Arg-359, along 2 possible pathways. In the first pathway, the first cleavage occurs at Arg-310, leading to the formation of the inactive intermediate prethrombin-2. This pathway preferentially occurs on platelets and in the absence of cofactor Va. In the second pathway, the first cleavage occurs at Arg-359, which separates protease domain into 2 chains that remain connected through a disulfide bond and generates the active intermediate meizothrombin. The presence of cofactor Va directs activation along the meizothrombin pathway and greatly accelerates the rate of cleavage at Arg-359, but has a smaller effect on the cleavage of meizothrombin at Arg-310. Meizothrombin accumulates as an intermediate when prothrombinase is assembled on the membrane of red blood cells.

The enzyme catalyses Selective cleavage of Arg-|-Gly bonds in fibrinogen to form fibrin and release fibrinopeptides A and B.. Activity is promoted in the presence of negatively charged surfaces, such as polyphosphate and dextran sulfate. Inhibited by SERPINA5. Functionally, thrombin, which cleaves bonds after Arg and Lys, converts fibrinogen to fibrin and activates factors V, VII, VIII, XIII, and, in complex with thrombomodulin, protein C. Functions in blood homeostasis, inflammation and wound healing. Activates coagulation factor XI (F11); activation is promoted by the contact with negatively charged surfaces. Triggers the production of pro-inflammatory cytokines, such as MCP-1/CCL2 and IL8/CXCL8, in endothelial cells. In Rattus norvegicus (Rat), this protein is Prothrombin (F2).